A 680-amino-acid chain; its full sequence is Galactose oxidase (680 aa).

The N-terminal stretch at 1 to 24 is a signal peptide; it reads MKHLLTLALCFSSINAVAVTVPHK. The propeptide occupies 25–41; the sequence is AVGTGIPEGSLQFLSLR. An F5/8 type C domain is found at 42–189; that stretch reads ASAPIGSAIS…SIAEINVFQA (148 aa). A disulfide bridge links C59 with C68. 5 Kelch repeats span residues 223–268, 279–321, 323–372, 436–490, and 492–544; these read RVLM…HDMF, QIVV…TMSD, RVFT…LYRS, KILT…VLPD, and STFI…LLLP. A cross-link (3'-(S-cysteinyl)-tyrosine (Cys-Tyr)) is located at residues 269–313; sequence CPGISMDGNGQIVVTGGNDAKKTSLYDSSSDSWIPGPDMQVARGY. A Cu cation-binding site is contributed by Y313. The Cu cation site is built by Y536 and H537. The active-site Proton acceptor is Y536. C556 and C559 are disulfide-bonded. H622 contributes to the Cu cation binding site.

As to quaternary structure, monomer. The cofactor is Cu(2+). Galactose oxidase contains a protein-derived free radical cofactor. In the active state, Tyr-313, which is cross-linked to Cys-269 via a thioether bond, is oxidized to a radical and acts with Cu(2+) as a two-electron acceptor in the oxidation reaction. The cross-link is believed to modulate the redox potential of the tyrosyl radical, which is further stabilized by a stacking interaction with Trp-331 in the active site. The post-translational formation of the cross-link is closely linked to the propeptide cleavage event, and both are copper-dependent, autocatalytic processes. The propeptide may act as an intramolecular chaperone, facilitating thioester bond formation and copper binding by positioning of active-site residues, including copper ligands.

The protein localises to the secreted. The enzyme catalyses D-galactose + O2 = D-galacto-hexodialdose + H2O2. Its activity is regulated as follows. Inhibited by diethyldithiocarbamate. Its function is as follows. Catalyzes the sterospecific oxidation of primary alcohols to the corresponding aldehydes. The biologically relevant substrate of the enzyme is not known as the enzyme exhibits broad substrate specificity from small alcohols through sugars to oligo- and polysaccharides. The chain is Galactose oxidase (GAOA) from Gibberella zeae (Wheat head blight fungus).